A 359-amino-acid polypeptide reads, in one-letter code: MITVNVDLGDRAYPIHIGAGLIGRTELFAPHINGSSVTIVTNTTVDPLYGDALRAALAPLGKRVSTVVLPDGEAYKNWETLNLIFDGLLTERADRKTTLIALGGGVIGDMTGFAAACYMRGVPFIQVPTTLLSQVDSSVGGKTGINHPLGKNMIGAFYQPQAVVADIGALATLPDRELAAGIAEVIKTGAIADAEFFDWIEANVDALNRREPAVLVHAVKRSCEIKASVVAADEREGGLRAILNFGHTFGHAIEAGLGYGEWLHGEAVGCGMVMAGDLSVRLGLLDEASRQRLDAVIAAARLPVSGPALGEARYMDLMRVDKKAEAGAIKFILLKRFGDTLIAPAPDEAVFATLAKTTR.

Residues 71-76 (DGEAYK), 105-109 (GVIGD), 129-130 (TT), K142, and K151 contribute to the NAD(+) site. Residues E184, H247, and H264 each coordinate Zn(2+).

It belongs to the sugar phosphate cyclases superfamily. Dehydroquinate synthase family. It depends on Co(2+) as a cofactor. The cofactor is Zn(2+). NAD(+) serves as cofactor.

It is found in the cytoplasm. The catalysed reaction is 7-phospho-2-dehydro-3-deoxy-D-arabino-heptonate = 3-dehydroquinate + phosphate. Its pathway is metabolic intermediate biosynthesis; chorismate biosynthesis; chorismate from D-erythrose 4-phosphate and phosphoenolpyruvate: step 2/7. In terms of biological role, catalyzes the conversion of 3-deoxy-D-arabino-heptulosonate 7-phosphate (DAHP) to dehydroquinate (DHQ). In Burkholderia vietnamiensis (strain G4 / LMG 22486) (Burkholderia cepacia (strain R1808)), this protein is 3-dehydroquinate synthase.